The chain runs to 192 residues: MDLNTLISQYGYAALVIGSLAEGETVTLLGGVAAHQGLLKFPLVVLSVALGGMIGDQVLYLCGRRFGGKLLRRFSKHQDKIERAQKLIQRHPYLFVIGTRFMYGFRVIGPTLIGASQLPPKIFLPLNILGAFAWALIFTTIGYAGGQVIAPWLHNLDQHLKHWVWLILVVVLVVGVRWWLKRRGKKKPDHQA.

Residues 1–40 (MDLNTLISQYGYAALVIGSLAEGETVTLLGGVAAHQGLLK) are Periplasmic-facing. Residues 41–61 (FPLVVLSVALGGMIGDQVLYL) form a helical membrane-spanning segment. Residues 62-121 (CGRRFGGKLLRRFSKHQDKIERAQKLIQRHPYLFVIGTRFMYGFRVIGPTLIGASQLPPK) lie on the Cytoplasmic side of the membrane. The helical transmembrane segment at 122-142 (IFLPLNILGAFAWALIFTTIG) threads the bilayer. Over 143–159 (YAGGQVIAPWLHNLDQH) the chain is Periplasmic. Residues 160–180 (LKHWVWLILVVVLVVGVRWWL) traverse the membrane as a helical segment. Residues 181–192 (KRRGKKKPDHQA) are Cytoplasmic-facing.

It belongs to the DedA family.

The protein localises to the cell inner membrane. This chain is Inner membrane protein YohD (yohD), found in Escherichia coli (strain K12).